The chain runs to 178 residues: Large ribosomal subunit protein uL6 (178 aa).

Belongs to the universal ribosomal protein uL6 family. In terms of assembly, part of the 50S ribosomal subunit.

Functionally, this protein binds to the 23S rRNA, and is important in its secondary structure. It is located near the subunit interface in the base of the L7/L12 stalk, and near the tRNA binding site of the peptidyltransferase center. This is Large ribosomal subunit protein uL6 from Lactococcus lactis subsp. lactis (strain IL1403) (Streptococcus lactis).